Consider the following 126-residue polypeptide: Protein LiaI (126 aa).

The next 2 membrane-spanning stretches (helical) occupy residues 11–31 (FLLI…GFII) and 56–76 (IIVG…VVGI).

Its subcellular location is the cell membrane. The protein is Protein LiaI (liaI) of Bacillus subtilis (strain 168).